Consider the following 88-residue polypeptide: Otospiralin (88 aa).

A signal peptide spans 1-21 (MQACMVPGLALCLLLGSLTEA).

This sequence belongs to the otospiralin family. As to expression, ear specific.

It localises to the secreted. Functionally, may be essential for the survival of the neurosensory epithelium of the inner ear. In Cavia porcellus (Guinea pig), this protein is Otospiralin (OTOS).